The primary structure comprises 982 residues: Probable DNA-directed RNA polymerase (982 aa).

The protein belongs to the RNA polymerase beta chain family.

The catalysed reaction is RNA(n) + a ribonucleoside 5'-triphosphate = RNA(n+1) + diphosphate. Functionally, the presence of the two linear plasmids, termed pGKL1 and pGKL2, in strains of Kluyveromyces lactis confers the killer phenotype to the host cell, by promoting the secretion of a toxin able to inhibit the growth of sensitive strains. The polypeptide is Probable DNA-directed RNA polymerase (Kluyveromyces lactis (strain ATCC 8585 / CBS 2359 / DSM 70799 / NBRC 1267 / NRRL Y-1140 / WM37) (Yeast)).